Consider the following 134-residue polypeptide: Small ribosomal subunit protein uS9 (134 aa).

Residues 114-134 are disordered; sequence EVERKKYGLKKARRAPQFSKR. A compositionally biased stretch (basic residues) spans 120–134; it reads YGLKKARRAPQFSKR.

It belongs to the universal ribosomal protein uS9 family.

The polypeptide is Small ribosomal subunit protein uS9 (Thermotoga sp. (strain RQ2)).